A 356-amino-acid chain; its full sequence is Vacuolar protein sorting-associated protein 26 (356 aa).

The interval 301–356 (MRRPGTEDDEEEKQTTSIPGTQKFTAPAPVEHPKPESPRSDPKSGSTSPDDNSDSS) is disordered. The span at 315–324 (TTSIPGTQKF) shows a compositional bias: polar residues. Over residues 331–342 (EHPKPESPRSDP) the composition is skewed to basic and acidic residues.

The protein belongs to the VPS26 family.

Its function is as follows. May play a role in vesicular protein sorting, similar to the yeast retromer proteins. The polypeptide is Vacuolar protein sorting-associated protein 26 (vps-26) (Caenorhabditis elegans).